The chain runs to 445 residues: Tubulin beta chain (445 aa).

8 residues coordinate GTP: Q11, E69, S138, G142, T143, G144, N204, and N226. E69 contacts Mg(2+). The interval 426 to 445 (QDATAEEEGEFEEEEGDVEA) is disordered. Positions 429–445 (TAEEEGEFEEEEGDVEA) are enriched in acidic residues.

This sequence belongs to the tubulin family. In terms of assembly, dimer of alpha and beta chains. A typical microtubule is a hollow water-filled tube with an outer diameter of 25 nm and an inner diameter of 15 nM. Alpha-beta heterodimers associate head-to-tail to form protofilaments running lengthwise along the microtubule wall with the beta-tubulin subunit facing the microtubule plus end conferring a structural polarity. Microtubules usually have 13 protofilaments but different protofilament numbers can be found in some organisms and specialized cells. Interacts with DCX/apicortin; the interaction stabilizes microtubule assembly. Mg(2+) is required as a cofactor.

It localises to the cytoplasm. The protein resides in the cytoskeleton. Functionally, tubulin is the major constituent of microtubules, a cylinder consisting of laterally associated linear protofilaments composed of alpha- and beta-tubulin heterodimers. Microtubules grow by the addition of GTP-tubulin dimers to the microtubule end, where a stabilizing cap forms. Below the cap, tubulin dimers are in GDP-bound state, owing to GTPase activity of alpha-tubulin. The protein is Tubulin beta chain of Plasmodium falciparum.